Consider the following 397-residue polypeptide: Tryptophan synthase beta chain (397 aa).

N6-(pyridoxal phosphate)lysine is present on Lys-87.

It belongs to the TrpB family. Tetramer of two alpha and two beta chains. The cofactor is pyridoxal 5'-phosphate.

The enzyme catalyses (1S,2R)-1-C-(indol-3-yl)glycerol 3-phosphate + L-serine = D-glyceraldehyde 3-phosphate + L-tryptophan + H2O. The protein operates within amino-acid biosynthesis; L-tryptophan biosynthesis; L-tryptophan from chorismate: step 5/5. The beta subunit is responsible for the synthesis of L-tryptophan from indole and L-serine. This is Tryptophan synthase beta chain from Escherichia fergusonii (strain ATCC 35469 / DSM 13698 / CCUG 18766 / IAM 14443 / JCM 21226 / LMG 7866 / NBRC 102419 / NCTC 12128 / CDC 0568-73).